We begin with the raw amino-acid sequence, 222 residues long: Small ribosomal subunit protein uS3 (222 aa).

The region spanning 39–107 (VREFLHKKLA…PVQINIEEVR (69 aa)) is the KH type-2 domain.

The protein belongs to the universal ribosomal protein uS3 family. Part of the 30S ribosomal subunit. Forms a tight complex with proteins S10 and S14.

Functionally, binds the lower part of the 30S subunit head. Binds mRNA in the 70S ribosome, positioning it for translation. This chain is Small ribosomal subunit protein uS3, found in Francisella tularensis subsp. tularensis (strain FSC 198).